We begin with the raw amino-acid sequence, 70 residues long: Putative membrane protein insertion efficiency factor (70 aa).

Belongs to the UPF0161 family.

It localises to the cell membrane. Could be involved in insertion of integral membrane proteins into the membrane. The chain is Putative membrane protein insertion efficiency factor from Finegoldia magna (strain ATCC 29328 / DSM 20472 / WAL 2508) (Peptostreptococcus magnus).